Here is a 223-residue protein sequence, read N- to C-terminus: Neurotrophic factor BDNF precursor form (223 aa).

Residues 1–5 form the signal peptide; the sequence is SCMKA. The propeptide occupies 6-114; that stretch reads APMKEVSIRG…AANMSMRVRR (109 aa). A glycan (N-linked (GlcNAc...) asparagine) is linked at Asn-107. 2 disulfides stabilise this stretch: Cys-127–Cys-194 and Cys-172–Cys-223.

It belongs to the NGF-beta family.

It is found in the secreted. Functionally, promotes the survival of neuronal populations that are all located either in the central nervous system or directly connected to it. This Eryx colubrinus colubrinus protein is Neurotrophic factor BDNF precursor form (BDNF).